The sequence spans 303 residues: Nucleotide-binding protein SAR0820 (303 aa).

Residue 18 to 25 (GLSGAGKS) coordinates ATP. Position 69–72 (69–72 (DLRG)) interacts with GTP.

This sequence belongs to the RapZ-like family.

In terms of biological role, displays ATPase and GTPase activities. The polypeptide is Nucleotide-binding protein SAR0820 (Staphylococcus aureus (strain MRSA252)).